The primary structure comprises 192 residues: tRNA (pseudouridine(54)-N(1))-methyltransferase (192 aa).

Positions 127 and 181 each coordinate S-adenosyl-L-methionine.

It belongs to the methyltransferase superfamily. TrmY family. As to quaternary structure, homodimer.

The protein resides in the cytoplasm. It carries out the reaction pseudouridine(54) in tRNA + S-adenosyl-L-methionine = N(1)-methylpseudouridine(54) in tRNA + S-adenosyl-L-homocysteine + H(+). Functionally, specifically catalyzes the N1-methylation of pseudouridine at position 54 (Psi54) in tRNAs. This chain is tRNA (pseudouridine(54)-N(1))-methyltransferase, found in Methanocella arvoryzae (strain DSM 22066 / NBRC 105507 / MRE50).